A 149-amino-acid chain; its full sequence is Large ribosomal subunit protein uL13 (149 aa).

This sequence belongs to the universal ribosomal protein uL13 family. As to quaternary structure, part of the 50S ribosomal subunit.

This protein is one of the early assembly proteins of the 50S ribosomal subunit, although it is not seen to bind rRNA by itself. It is important during the early stages of 50S assembly. The sequence is that of Large ribosomal subunit protein uL13 from Chlorobium luteolum (strain DSM 273 / BCRC 81028 / 2530) (Pelodictyon luteolum).